Here is a 496-residue protein sequence, read N- to C-terminus: Matrilin-1 (496 aa).

Positions 1 to 22 (MRVLSGTSLMLCSLLLLLQALC) are cleaved as a signal peptide. The VWFA 1 domain maps to 23–222 (SPGLAPQSRG…SRKFQEAFCV (200 aa)). N-linked (GlcNAc...) asparagine glycosylation is present at Asn-76. The 41-residue stretch at 223 to 263 (VSDLCATGDHDCEQVCISSPGSYTCACHEGFTLNSDGKTCN) folds into the EGF-like domain. 3 disulfides stabilise this stretch: Cys-227-Cys-238, Cys-234-Cys-247, and Cys-249-Cys-262. A VWFA 2 domain is found at 264–453 (VCSGGGGSSA…GKKLQKKICV (190 aa)). An N-linked (GalNAc...) asparagine glycan is attached at Asn-344. Positions 467–495 (QAKVEGLLQALTRKLEAVSKRLAILENTV) form a coiled coil.

Homotrimer. Part of a complex composed of MATN1 (via VWFA1 domain), type 2 collagens and type 6 collagens. Forms a complex (via covalent bonds) with ACAN; the interaction increases in abundance with increasing age of the organism via an increase in occupancy of MATN1 binding sites. Interacts with COMP. Post-translationally, N-glycosylated; reduces binding affinity for type 2 collagens.

The protein localises to the secreted. It is found in the extracellular space. It localises to the extracellular matrix. A major component of the extracellular matrix of non-articular cartilage. Binds to type 2 collagens and forms long concatenated protein networks as part of the extracellular matrix. Required for the network-like organization and bundling of collagen fibrils surrounding chondrocytes in the zones of maturation and hypertrophy. Required for mechanotransduction and adaption to mechanical loading in cartilage chondrocytes, resulting in an increase in expression of the extracellular matrix components ACAN and COL2A1. Acts as a moderator of angiogenesis in response to injury. The protein is Matrilin-1 of Homo sapiens (Human).